The sequence spans 170 residues: Cathelicidin antimicrobial peptide (170 aa).

Residues 1 to 30 (MKTQRHGPSLGRWSLVLLLLGLVMPLAIVA) form the signal peptide. The propeptide at 31 to 131 (QVLSYQEAVL…DISCDKDNRR (101 aa)) is cathelin-like domain (CLD). 2 disulfide bridges follow: Cys-86–Cys-97 and Cys-108–Cys-125. An active core region spans residues 150–162 (LKKIGQKIKDFLG).

Belongs to the cathelicidin family. As to quaternary structure, monomer, homodimer or homotrimer (in vitro). Oligomerizes as tetra- or hexamer in solution (in vitro). In terms of processing, proteolytically cleaved by proteinase PRTN3 into antibacterial peptide LL-37. Proteolytically cleaved by cathepsin CTSG and neutrophil elastase ELANE. Resistant to proteolytic degradation in solution, and when bound to both zwitterionic (mimicking mammalian membranes) and negatively charged membranes (mimicking bacterial membranes). Post-translationally, after secretion onto the skin surface, the CAMP gene product is processed by a serine protease-dependent mechanism into multiple novel antimicrobial peptides distinct from and shorter than cathelicidin LL-37. These peptides show enhanced antimicrobial action, acquiring the ability to kill skin pathogens such as S.aureus, E.coli and C.albicans. These peptides have lost the ability to stimulate CXCL8/IL8 release from keratinocytes. The peptides act synergistically, killing bacteria at lower concentrations when present together, and maintain activity at increased salt condition.

The protein resides in the secreted. It is found in the vesicle. Its function is as follows. Antimicrobial protein that is an integral component of the innate immune system. Binds to bacterial lipopolysaccharides (LPS). Acts via neutrophil N-formyl peptide receptors to enhance the release of CXCL2. Postsecretory processing generates multiple cathelicidin antimicrobial peptides with various lengths which act as a topical antimicrobial defense in sweat on skin. The unprocessed precursor form, cathelicidin antimicrobial peptide, inhibits the growth of Gram-negative E.coli and E.aerogenes with efficiencies comparable to that of the mature peptide LL-37 (in vitro). Antimicrobial peptide that is an integral component of the innate immune system. Binds to bacterial lipopolysaccharides (LPS). Causes membrane permeabilization by forming transmembrane pores (in vitro). Causes lysis of E.coli. Exhibits antimicrobial activity against Gram-negative bacteria such as P.aeruginosa, S.typhimurium, E.aerogenes, E.coli and P.syringae, Gram-positive bacteria such as L.monocytogenes, S.epidermidis, S.pyogenes and S.aureus, as well as vancomycin-resistant enterococci (in vitro). Exhibits antimicrobial activity against methicillin-resistant S.aureus, P.mirabilis, and C.albicans in low-salt media, but not in media containing 100 mM NaCl (in vitro). Forms chiral supramolecular assemblies with quinolone signal (PQS) molecules of P.aeruginosa, which may lead to interference of bacterial quorum signaling and perturbance of bacterial biofilm formation. May form supramolecular fiber-like assemblies on bacterial membranes. Induces cytokine and chemokine producation as well as TNF/TNFA and CSF2/GMCSF production in normal human keratinocytes. Exhibits hemolytic activity against red blood cells. In terms of biological role, exhibits antimicrobial activity against E.coli and B.megaterium (in vitro). The chain is Cathelicidin antimicrobial peptide from Trachypithecus obscurus (Dusky leaf-monkey).